The chain runs to 196 residues: UPF0215 protein MA_4269 (196 aa).

This sequence belongs to the UPF0215 family.

This is UPF0215 protein MA_4269 from Methanosarcina acetivorans (strain ATCC 35395 / DSM 2834 / JCM 12185 / C2A).